A 126-amino-acid chain; its full sequence is Protein ApaG (126 aa).

In terms of domain architecture, ApaG spans 2 to 126 (SDPRYQVDVS…FRLAVPGALH (125 aa)).

The polypeptide is Protein ApaG (Pseudomonas fluorescens (strain Pf0-1)).